The primary structure comprises 359 residues: Methylthioribose-1-phosphate isomerase (359 aa).

Residues 50-52 (RGA), Arg-93, and Gln-200 each bind substrate. The Proton donor role is filled by Asp-241. 251 to 252 (NK) is a substrate binding site.

The protein belongs to the eIF-2B alpha/beta/delta subunits family. MtnA subfamily.

The catalysed reaction is 5-(methylsulfanyl)-alpha-D-ribose 1-phosphate = 5-(methylsulfanyl)-D-ribulose 1-phosphate. It participates in amino-acid biosynthesis; L-methionine biosynthesis via salvage pathway; L-methionine from S-methyl-5-thio-alpha-D-ribose 1-phosphate: step 1/6. In terms of biological role, catalyzes the interconversion of methylthioribose-1-phosphate (MTR-1-P) into methylthioribulose-1-phosphate (MTRu-1-P). The chain is Methylthioribose-1-phosphate isomerase from Symbiobacterium thermophilum (strain DSM 24528 / JCM 14929 / IAM 14863 / T).